A 757-amino-acid polypeptide reads, in one-letter code: Lysyl oxidase homolog 4 (757 aa).

Positions 1 to 25 (MMWPQPPTFSLFLLLLLSQAPSSRP) are cleaved as a signal peptide. SRCR domains follow at residues 33–134 (LRLV…VVCH), 160–288 (VRLK…VSCV), 312–412 (VRLR…VRCN), and 422–530 (VRLA…VACM). Intrachain disulfides connect C59-C123, C72-C133, C103-C113, C192-C277, C205-C287, C252-C262, C337-C401, C350-C411, C381-C391, C451-C516, C464-C529, C498-C508, C559-C565, C611-C659, C643-C649, C671-C681, and C718-C732. N-linked (GlcNAc...) asparagine glycosylation occurs at N199. The segment at 534–737 (PDLVMNAQLV…WLHNCHTGDS (204 aa)) is lysyl-oxidase like. H612, H614, and H616 together coordinate Cu cation. N630 carries an N-linked (GlcNAc...) asparagine glycan. The segment at residues 639–675 (KASFCLEDTNCPSGVQRRYACANFGEQGVAVGCWDTY) is a cross-link (lysine tyrosylquinone (Lys-Tyr)). Position 675 is a 2',4',5'-topaquinone (Y675).

It belongs to the lysyl oxidase family. It depends on Cu cation as a cofactor. Requires lysine tyrosylquinone residue as cofactor. Post-translationally, the lysine tyrosylquinone cross-link (LTQ) is generated by condensation of the epsilon-amino group of a lysine with a topaquinone produced by oxidation of tyrosine. May be proteolytically cleaved by BMP1.

Its subcellular location is the secreted. The protein localises to the extracellular space. The catalysed reaction is L-lysyl-[protein] + O2 + H2O = (S)-2-amino-6-oxohexanoyl-[protein] + H2O2 + NH4(+). In terms of biological role, catalyzes the oxidative deamination of lysine and hydroxylysine residues in collagen and elastin, resulting in the formation of covalent cross-linkages, and the stabilization of collagen and elastin fibers. The chain is Lysyl oxidase homolog 4 (Loxl4) from Mus musculus (Mouse).